Consider the following 259-residue polypeptide: HTH-type transcriptional regulator Rv1931c (259 aa).

Positions 104–121 (SHRRHRPRAGTGRRRPRH) are enriched in basic residues. Residues 104–170 (SHRRHRPRAG…GAGGHRGRAG (67 aa)) form a disordered region. Residues 174-257 (RIGELAQRAA…GISPDQYRKA (84 aa)) enclose the HTH araC/xylS-type domain. DNA-binding regions (H-T-H motif) lie at residues 176 to 197 (GELA…SDEV) and 224 to 247 (VVAI…IRRV).

Controls the expression of genes important for virulence. In Mycobacterium tuberculosis (strain ATCC 25618 / H37Rv), this protein is HTH-type transcriptional regulator Rv1931c.